We begin with the raw amino-acid sequence, 339 residues long: tRNA N6-adenosine threonylcarbamoyltransferase (339 aa).

Residues His-107 and His-111 each contribute to the Fe cation site. Residues Leu-129–Gly-133, Asp-162, Gly-175, and Asn-279 contribute to the substrate site. A Fe cation-binding site is contributed by Asp-307.

The protein belongs to the KAE1 / TsaD family. It depends on Fe(2+) as a cofactor.

Its subcellular location is the cytoplasm. The catalysed reaction is L-threonylcarbamoyladenylate + adenosine(37) in tRNA = N(6)-L-threonylcarbamoyladenosine(37) in tRNA + AMP + H(+). In terms of biological role, required for the formation of a threonylcarbamoyl group on adenosine at position 37 (t(6)A37) in tRNAs that read codons beginning with adenine. Is involved in the transfer of the threonylcarbamoyl moiety of threonylcarbamoyl-AMP (TC-AMP) to the N6 group of A37, together with TsaE and TsaB. TsaD likely plays a direct catalytic role in this reaction. This Campylobacter curvus (strain 525.92) protein is tRNA N6-adenosine threonylcarbamoyltransferase.